The following is a 467-amino-acid chain: MRNAELIFIPTPTVGHLVPFLEFARRLIEQDDRIRITFLLMKQQGQSHLDSYVKTISSSLPFVRFIDVPELEEKPTLGTQSVEAYVYDFIETNVPLVQNIIMGILSSPAFDGVTVKGFVADFFCLPMIDVAKDASLPFYVFLTSNSGFLAMMQYLAYGHKKDTSVFARNSEEMLSIPGFVNPVPAKVLPSALFIEDGYDADVKLAILFTKANGILVNTSFDIEPTSLNHFLGEENYPSVYAVGPIFNPKAHPHPDQDLACCDESMKWLDAQPEASVVFLCFGSMGSLRGPLVKEIAHGLELCQYRFLWSLRTEEVTNDDLLPEGFMDRVSGRGMICGWSPQVEILAHKAVGGFVSHCGWNSIVESLWFGVPIVTWPMYAEQQLNAFLMVKELKLAVELKLDYSVHSGEIVSANEIETAISCVMNKDNNVVRKRVMDISQMIQRATKNGGSSFAAIEKFIHDVIGTRT.

UDP-alpha-D-glucose is bound by residues Ser283, 339 to 341, 356 to 364, and 378 to 381; these read SPQ, HCGWNSIVE, and YAEQ.

This sequence belongs to the UDP-glycosyltransferase family.

This Arabidopsis thaliana (Mouse-ear cress) protein is UDP-glycosyltransferase 71D2 (UGT71D2).